Consider the following 241-residue polypeptide: Carboxy-S-adenosyl-L-methionine synthase (241 aa).

S-adenosyl-L-methionine is bound by residues Tyr38, 63–65 (GCS), 88–89 (DN), 116–117 (DI), Asn131, and Arg198.

Belongs to the class I-like SAM-binding methyltransferase superfamily. Cx-SAM synthase family. As to quaternary structure, homodimer.

The catalysed reaction is prephenate + S-adenosyl-L-methionine = carboxy-S-adenosyl-L-methionine + 3-phenylpyruvate + H2O. Catalyzes the conversion of S-adenosyl-L-methionine (SAM) to carboxy-S-adenosyl-L-methionine (Cx-SAM). In Actinobacillus pleuropneumoniae serotype 7 (strain AP76), this protein is Carboxy-S-adenosyl-L-methionine synthase.